The sequence spans 224 residues: Large ribosomal subunit protein uL1m (224 aa).

Belongs to the universal ribosomal protein uL1 family.

The protein resides in the mitochondrion. The protein is Large ribosomal subunit protein uL1m (RPL1) of Reclinomonas americana.